Consider the following 54-residue polypeptide: Photoreceptor disk component PRCD (54 aa).

Residue cysteine 2 is the site of S-palmitoyl cysteine attachment. The tract at residues 24–54 (QPEPNGVDGAVSGSSLETDLQSSGREKEPLK) is disordered. Residues 35-46 (SGSSLETDLQSS) are compositionally biased toward polar residues.

The protein belongs to the PRCD family. As to quaternary structure, interacts with RHO/rhodopsin; the interaction promotes PRCD stability. In terms of processing, palmitoylated at Cys-2. Palmitoylation is essential for protein stability and trafficking to the photoreceptor outer segment, but does not appear to be essential for membrane localization. Probably palmitoylated by ZDHHC3. Phosphorylated. Expressed in retina (at protein level).

The protein localises to the cell projection. It localises to the cilium. Its subcellular location is the photoreceptor outer segment. The protein resides in the membrane. It is found in the endoplasmic reticulum. The protein localises to the golgi apparatus. Involved in vision. The protein is Photoreceptor disk component PRCD of Bos taurus (Bovine).